Here is a 446-residue protein sequence, read N- to C-terminus: MHTLLAFIFAILILVSLHEFGHYIVARLCGVKVVRFSVGFGKPFFTRKRGDTEWCLAPIPLGGYVKMVDTREGEVSEADLPYAFDKQHPAKRIAIVAAGPLTNLALAVLLYGLSFSFGVTELRPYVGTVEPDTIAARAGFQSGDKIQSVNGTPVADWGSAQTEIVLNLEAGKVAVGVQTASGAQTVRTIDAAGTPEAGKIAKNQGYIGLMPFKITTVAGGVEKGSPAEKAGLKPGDRLTAADGKPIASWQEWANLTRQSPGKKITLTYERAGQTHTADIRPDTVEQPDHTLIGRVGLRPQPDRAWDAQIRRSYRPSVVRAFGMGWEKTVSHSWTTLKFFGKLISGNASVSHISGPLTIADIAGQSAELGLQSYLEFLALVSISLGVLNLLPVPVLDGGHLVFYTAEWIRGKPLGERVQNIGLRFGLALMMLMMAVAFFNDVTRLLG.

Histidine 18 contributes to the Zn(2+) binding site. The active site involves glutamate 19. Histidine 22 lines the Zn(2+) pocket. 3 helical membrane passes run 93 to 115 (IAIV…GLSF), 376 to 398 (FLAL…LDGG), and 419 to 438 (NIGL…VAFF). Residues 100–181 (PLTNLALAVL…KVAVGVQTAS (82 aa)) form the PDZ domain.

Belongs to the peptidase M50B family. Requires Zn(2+) as cofactor.

It localises to the cell inner membrane. This chain is Putative zinc metalloprotease NMA0084, found in Neisseria meningitidis serogroup A / serotype 4A (strain DSM 15465 / Z2491).